We begin with the raw amino-acid sequence, 641 residues long: Sodium-dependent nutrient amino acid transporter 1 (641 aa).

The tract at residues 1–34 (MELKGVQPSNGSANGNGTTNAASTEKADTEKQTA) is disordered. At 1-38 (MELKGVQPSNGSANGNGTTNAASTEKADTEKQTAERTN) the chain is on the cytoplasmic side. Over residues 9–24 (SNGSANGNGTTNAAST) the composition is skewed to low complexity. Residues 25 to 34 (EKADTEKQTA) are compositionally biased toward basic and acidic residues. The next 3 helical transmembrane spans lie at 39 to 59 (WGNGLEFLMSCISVSVGLGNV), 72 to 92 (GAFLIPYIIVLFLIGKPMYYL), and 109 to 129 (SVVPGFVGVGYGQAFGTICII). N183 and N188 each carry an N-linked (GlcNAc...) asparagine glycan. 9 consecutive transmembrane segments (helical) span residues 229–249 (PDWKLTLALFVAWVVIFLVIM), 258–278 (AAYFLALFPYVVLFVLLIRAV), 307–327 (AVVQCFFSLAVGSGPIIMFAS), 341–361 (IVTTLDTLTSLLGGITIFAIL), 401–421 (LFSVLFFFMLFVLGIGSIVAL), 441–461 (VALITSACGFLMGLVYVTPGG), 474–494 (TYVVFILAIFELAGIVWVYGL), 516–536 (CWSFFTPVMMIIIFIYSMATI), and 552–572 (IAGWLLFAIGAAQFPLWGLWY).

This sequence belongs to the sodium:neurotransmitter symporter (SNF) (TC 2.A.22) family.

Its subcellular location is the membrane. Unusual broad substrate spectrum amino acid:sodium cotransporter that promotes absorption of the D isomers of essential amino acids. Neutral amino acids are the preferred substrates, especially methionine and phenylalanine. This Drosophila yakuba (Fruit fly) protein is Sodium-dependent nutrient amino acid transporter 1.